The primary structure comprises 362 residues: Molybdenum import ATP-binding protein ModC (362 aa).

In terms of domain architecture, ABC transporter spans 1-236 (MTASGLYLNL…TQSPTAQGED (236 aa)). 36 to 43 (GPSGSGKT) contributes to the ATP binding site. The Mop domain occupies 297-362 (DSTILNKLAA…AQVKSVAIVG (66 aa)).

The protein belongs to the ABC transporter superfamily. Molybdate importer (TC 3.A.1.8) family. In terms of assembly, the complex is composed of two ATP-binding proteins (ModC), two transmembrane proteins (ModB) and a solute-binding protein (ModA).

It localises to the cell inner membrane. The catalysed reaction is molybdate(out) + ATP + H2O = molybdate(in) + ADP + phosphate + H(+). Part of the ABC transporter complex ModABC involved in molybdenum import. Responsible for energy coupling to the transport system. In Saccharophagus degradans (strain 2-40 / ATCC 43961 / DSM 17024), this protein is Molybdenum import ATP-binding protein ModC.